Here is a 235-residue protein sequence, read N- to C-terminus: C-type lectin domain family 2 member D-related protein (235 aa).

A disordered region spans residues M1 to T50. The Cytoplasmic segment spans residues M1–K75. Low complexity predominate over residues S30–T50. Residues L76 to A96 traverse the membrane as a helical; Signal-anchor for type II membrane protein segment. Residues L97–P235 are Extracellular-facing. Residues F121 to S232 enclose the C-type lectin domain. N-linked (GlcNAc...) asparagine glycosylation occurs at N134.

The protein resides in the cell membrane. In terms of biological role, lectin-type cell surface receptor. This is C-type lectin domain family 2 member D-related protein from Rattus norvegicus (Rat).